The following is a 444-amino-acid chain: UDP-N-acetylmuramoylalanine--D-glutamate ligase (444 aa).

109–115 contributes to the ATP binding site; that stretch reads GSNGKTT.

It belongs to the MurCDEF family.

It is found in the cytoplasm. The enzyme catalyses UDP-N-acetyl-alpha-D-muramoyl-L-alanine + D-glutamate + ATP = UDP-N-acetyl-alpha-D-muramoyl-L-alanyl-D-glutamate + ADP + phosphate + H(+). Its pathway is cell wall biogenesis; peptidoglycan biosynthesis. Its function is as follows. Cell wall formation. Catalyzes the addition of glutamate to the nucleotide precursor UDP-N-acetylmuramoyl-L-alanine (UMA). This Bacteroides thetaiotaomicron (strain ATCC 29148 / DSM 2079 / JCM 5827 / CCUG 10774 / NCTC 10582 / VPI-5482 / E50) protein is UDP-N-acetylmuramoylalanine--D-glutamate ligase.